The primary structure comprises 149 residues: uncharacterized protein (149 aa).

Basic and acidic residues predominate over residues 1–11 (MTKESKPDRLR). The interval 1–20 (MTKESKPDRLRQMGALNPKP) is disordered.

This is an uncharacterized protein from Sinorhizobium fredii (strain NBRC 101917 / NGR234).